Here is a 765-residue protein sequence, read N- to C-terminus: FHF complex subunit HOOK interacting protein 2A (765 aa).

2 stretches are compositionally biased toward polar residues: residues 200–209 (LSTDTGQSCQ) and 538–550 (NTLS…SSSP). 2 disordered regions span residues 200–234 (LSTD…QMGD) and 538–562 (NTLS…TDGK).

It belongs to the FHIP family.

May be required for proper functioning of the nervous system. The sequence is that of FHF complex subunit HOOK interacting protein 2A (FHIP2A) from Bos taurus (Bovine).